The primary structure comprises 461 residues: Cysteine--tRNA ligase (461 aa).

A Zn(2+)-binding site is contributed by Cys-28. The short motif at 30–40 (ITIYDLCHIGH) is the 'HIGH' region element. Cys-209, His-234, and Glu-238 together coordinate Zn(2+). The 'KMSKS' region signature appears at 266-270 (KMSKS). An ATP-binding site is contributed by Lys-269.

This sequence belongs to the class-I aminoacyl-tRNA synthetase family. Monomer. Requires Zn(2+) as cofactor.

Its subcellular location is the cytoplasm. It carries out the reaction tRNA(Cys) + L-cysteine + ATP = L-cysteinyl-tRNA(Cys) + AMP + diphosphate. This Photorhabdus laumondii subsp. laumondii (strain DSM 15139 / CIP 105565 / TT01) (Photorhabdus luminescens subsp. laumondii) protein is Cysteine--tRNA ligase.